A 379-amino-acid polypeptide reads, in one-letter code: Cytochrome b (379 aa).

Helical transmembrane passes span 33–53, 77–98, 113–133, and 178–198; these read FGSL…FLAM, WLIR…FIHV, WNIG…GYVL, and FFAF…VHLL. H83 and H97 together coordinate heme b. H182 and H196 together coordinate heme b. H201 provides a ligand contact to a ubiquinone. The next 4 helical transmembrane spans lie at 226-246, 288-308, 320-340, and 347-367; these read IKDL…ALFF, LGGV…PLLN, ITQT…WIGG, and FTTI…ILMP.

It belongs to the cytochrome b family. In terms of assembly, the cytochrome bc1 complex contains 11 subunits: 3 respiratory subunits (MT-CYB, CYC1 and UQCRFS1), 2 core proteins (UQCRC1 and UQCRC2) and 6 low-molecular weight proteins (UQCRH/QCR6, UQCRB/QCR7, UQCRQ/QCR8, UQCR10/QCR9, UQCR11/QCR10 and a cleavage product of UQCRFS1). This cytochrome bc1 complex then forms a dimer. Heme b serves as cofactor.

Its subcellular location is the mitochondrion inner membrane. Its function is as follows. Component of the ubiquinol-cytochrome c reductase complex (complex III or cytochrome b-c1 complex) that is part of the mitochondrial respiratory chain. The b-c1 complex mediates electron transfer from ubiquinol to cytochrome c. Contributes to the generation of a proton gradient across the mitochondrial membrane that is then used for ATP synthesis. This is Cytochrome b (MT-CYB) from Akodon aerosus (Highland grass mouse).